Here is a 473-residue protein sequence, read N- to C-terminus: Keratin, type I cuticular Ha6 (473 aa).

The interval 1–93 (MATQICTPTF…FCEGAFNGNE (93 aa)) is head. The region spanning 93–404 (EKATMQILND…RLLDGEDCKL (312 aa)) is the IF rod domain. Residues 94 to 128 (KATMQILNDRLANYLEKVRQLEQENTQLECRIREW) form a coil 1A region. Positions 129-139 (YECQIPYICPD) are linker 1. The segment at 140-240 (YQSYFKTAEE…HEEEVNALRS (101 aa)) is coil 1B. The interval 241-256 (QLGDRLNVEVDAAPPV) is linker 12. The segment at 257 to 400 (DLNKILDDMR…ATYRRLLDGE (144 aa)) is coil 2. The tail stretch occupies residues 401–473 (DCKLPAHPCS…SREHVVPRAM (73 aa)).

Belongs to the intermediate filament family. As to quaternary structure, heterotetramer of two type I and two type II keratins. As to expression, in skin, only expressed in the suprabasal cells of tail scale epidermis. Suprabasally expressed in stratified squamous epithelia and also in the posterior unit of the complex filiform papillae of tongue. Expressed in rare anatomical sites in which an orthokeratinized stratum corneum would be too soft and a hard keratinized structure would be too rigid to meet the functional requirement of the respective epithelia.

The protein is Keratin, type I cuticular Ha6 of Mus musculus (Mouse).